The sequence spans 153 residues: 6,7-dimethyl-8-ribityllumazine synthase (153 aa).

Residues phenylalanine 22, 56 to 58, and 80 to 82 contribute to the 5-amino-6-(D-ribitylamino)uracil site; these read AFE and TVI. 85–86 is a binding site for (2S)-2-hydroxy-3-oxobutyl phosphate; sequence AT. Histidine 88 (proton donor) is an active-site residue. Position 113 (phenylalanine 113) interacts with 5-amino-6-(D-ribitylamino)uracil. Residue arginine 127 participates in (2S)-2-hydroxy-3-oxobutyl phosphate binding.

This sequence belongs to the DMRL synthase family.

It carries out the reaction (2S)-2-hydroxy-3-oxobutyl phosphate + 5-amino-6-(D-ribitylamino)uracil = 6,7-dimethyl-8-(1-D-ribityl)lumazine + phosphate + 2 H2O + H(+). It functions in the pathway cofactor biosynthesis; riboflavin biosynthesis; riboflavin from 2-hydroxy-3-oxobutyl phosphate and 5-amino-6-(D-ribitylamino)uracil: step 1/2. In terms of biological role, catalyzes the formation of 6,7-dimethyl-8-ribityllumazine by condensation of 5-amino-6-(D-ribitylamino)uracil with 3,4-dihydroxy-2-butanone 4-phosphate. This is the penultimate step in the biosynthesis of riboflavin. The protein is 6,7-dimethyl-8-ribityllumazine synthase of Clostridium perfringens (strain ATCC 13124 / DSM 756 / JCM 1290 / NCIMB 6125 / NCTC 8237 / Type A).